Here is a 185-residue protein sequence, read N- to C-terminus: Large ribosomal subunit protein uL5 (185 aa).

It belongs to the universal ribosomal protein uL5 family. In terms of assembly, part of the 50S ribosomal subunit; part of the 5S rRNA/L5/L18/L25 subcomplex. Contacts the 5S rRNA and the P site tRNA. Forms a bridge to the 30S subunit in the 70S ribosome.

Its function is as follows. This is one of the proteins that bind and probably mediate the attachment of the 5S RNA into the large ribosomal subunit, where it forms part of the central protuberance. In the 70S ribosome it contacts protein S13 of the 30S subunit (bridge B1b), connecting the 2 subunits; this bridge is implicated in subunit movement. Contacts the P site tRNA; the 5S rRNA and some of its associated proteins might help stabilize positioning of ribosome-bound tRNAs. This chain is Large ribosomal subunit protein uL5, found in Rhizobium etli (strain ATCC 51251 / DSM 11541 / JCM 21823 / NBRC 15573 / CFN 42).